We begin with the raw amino-acid sequence, 1563 residues long: DNA-directed RNA polymerase subunit beta' (1563 aa).

Zn(2+) contacts are provided by Cys61, Cys63, Cys76, and Cys79. 3 residues coordinate Mg(2+): Asp588, Asp590, and Asp592. Zn(2+)-binding residues include Cys925, Cys999, Cys1006, and Cys1009.

Belongs to the RNA polymerase beta' chain family. As to quaternary structure, the RNAP catalytic core consists of 2 alpha, 1 beta, 1 beta' and 1 omega subunit. When a sigma factor is associated with the core the holoenzyme is formed, which can initiate transcription. Mg(2+) is required as a cofactor. It depends on Zn(2+) as a cofactor.

It catalyses the reaction RNA(n) + a ribonucleoside 5'-triphosphate = RNA(n+1) + diphosphate. Its function is as follows. DNA-dependent RNA polymerase catalyzes the transcription of DNA into RNA using the four ribonucleoside triphosphates as substrates. This chain is DNA-directed RNA polymerase subunit beta', found in Hydrogenobaculum sp. (strain Y04AAS1).